The primary structure comprises 140 residues: uncharacterized protein (140 aa).

A disordered region spans residues 62 to 140 (TEARAGRGGP…PQGRWGPSLG (79 aa)). Residues 71 to 94 (PATARSRVSADSQGGRAGSSSPSS) are compositionally biased toward low complexity.

This is an uncharacterized protein from Homo sapiens (Human).